A 382-amino-acid chain; its full sequence is Anhydro-N-acetylmuramic acid kinase (382 aa).

9-16 (GTSLDGID) provides a ligand contact to ATP.

Belongs to the anhydro-N-acetylmuramic acid kinase family.

The catalysed reaction is 1,6-anhydro-N-acetyl-beta-muramate + ATP + H2O = N-acetyl-D-muramate 6-phosphate + ADP + H(+). It functions in the pathway amino-sugar metabolism; 1,6-anhydro-N-acetylmuramate degradation. It participates in cell wall biogenesis; peptidoglycan recycling. Functionally, catalyzes the specific phosphorylation of 1,6-anhydro-N-acetylmuramic acid (anhMurNAc) with the simultaneous cleavage of the 1,6-anhydro ring, generating MurNAc-6-P. Is required for the utilization of anhMurNAc either imported from the medium or derived from its own cell wall murein, and thus plays a role in cell wall recycling. The sequence is that of Anhydro-N-acetylmuramic acid kinase from Bacillus thuringiensis subsp. konkukian (strain 97-27).